A 131-amino-acid polypeptide reads, in one-letter code: Small ribosomal subunit protein uS8 (131 aa).

It belongs to the universal ribosomal protein uS8 family. As to quaternary structure, part of the 30S ribosomal subunit. Contacts proteins S5 and S12.

In terms of biological role, one of the primary rRNA binding proteins, it binds directly to 16S rRNA central domain where it helps coordinate assembly of the platform of the 30S subunit. This is Small ribosomal subunit protein uS8 from Helicobacter acinonychis (strain Sheeba).